The sequence spans 382 residues: Serine protease 23 (382 aa).

Positions 1-22 (MAGIPGLFILLVLLCVFMQVSP) are cleaved as a signal peptide. Asn92 is a glycosylation site (N-linked (GlcNAc...) asparagine). Cys159 and Cys175 form a disulfide bridge. Catalysis depends on His174, which acts as the Charge relay system. An N-linked (GlcNAc...) asparagine glycan is attached at Asn206. Active-site charge relay system residues include Asp239 and Ser315.

This sequence belongs to the peptidase S1 family.

Its subcellular location is the secreted. The sequence is that of Serine protease 23 (Prss23) from Mus musculus (Mouse).